A 203-amino-acid polypeptide reads, in one-letter code: MRGKFITFEGIDGAGKSTHIGAVAARLRERKDIPAVVTTREPGGTPLGEDLRQILLHRKMHLETEALLMFAARREHIAEVIEPALARGDWVISDRFTDATFAYQGGGRGLATSRLETLETWVQDGLQPDLTLLFDVPLETASERLAGAREPDKFEAESRAFFERTRAEYLRRAAQAPERFRVIDATQSIEAIRVELEKIISTL.

An ATP-binding site is contributed by G10 to S17.

The protein belongs to the thymidylate kinase family.

It catalyses the reaction dTMP + ATP = dTDP + ADP. Its function is as follows. Phosphorylation of dTMP to form dTDP in both de novo and salvage pathways of dTTP synthesis. The sequence is that of Thymidylate kinase from Cupriavidus pinatubonensis (strain JMP 134 / LMG 1197) (Cupriavidus necator (strain JMP 134)).